The chain runs to 292 residues: Protease HtpX (292 aa).

The next 2 membrane-spanning stretches (helical) occupy residues 5–25 (IFLF…VMSL) and 34–54 (SGLL…SLLL). H140 lines the Zn(2+) pocket. E141 is a catalytic residue. Residue H144 coordinates Zn(2+). The next 2 helical transmembrane spans lie at 155–175 (LLQG…GGII) and 193–213 (IIVF…AMWF). Zn(2+) is bound at residue E218.

This sequence belongs to the peptidase M48B family. It depends on Zn(2+) as a cofactor.

It localises to the cell inner membrane. The polypeptide is Protease HtpX (Xanthomonas euvesicatoria pv. vesicatoria (strain 85-10) (Xanthomonas campestris pv. vesicatoria)).